A 194-amino-acid chain; its full sequence is Large ribosomal subunit protein bL17 (194 aa).

Residues 126–194 (AEPKQTKART…SPEQTNKQEE (69 aa)) form a disordered region. Positions 131–140 (TKARTRRGKG) are enriched in basic residues. 2 stretches are compositionally biased toward polar residues: residues 144–161 (ATTTVSSEKTQPNTQDMA) and 181–194 (LDTQSPEQTNKQEE).

This sequence belongs to the bacterial ribosomal protein bL17 family. As to quaternary structure, part of the 50S ribosomal subunit. Contacts protein L32.

The polypeptide is Large ribosomal subunit protein bL17 (Amoebophilus asiaticus (strain 5a2)).